The sequence spans 760 residues: MATTTHILGYPRIGEKRELKFAQEKYWRGDIDQTELKKVGADLRAKNWQTQTEAGLSFTTAGDFAWYDHVLTTTLLLGHVPKRHAGGFPNLDTLFKVGRGQSQAGCGCAGAAASDMTKWFNTNYHYIVPEFSKDDTFEVSWPQLFEEINEAVQAGHKVKPVLLGPVSYLYLGKEVEEGFDRLTLLPRLLTAYQAILAKLASQGVEWVQIDEPILSLELEKQWADAFKLAYQLIRSDVKVLLTTYFDSVTDTLDKIVELPVDGLHVDLSAAPQQLDDVVAKLPEGWVLSAGVVNGRNVWRSDLSAQLERLQPVKEKLGDKLWVASSCSLLHSPVDLELETELSEEVKSWFAFAKQKVTEVALLGRALDGDQNAILACDTYSQPIKARKTATHVNKPQVQVRLNNITASLAERSAPYAERAAHQAEVLGLPLLPTTTIGSFPQTGEIRVQRSAYRTGQLSESDYIQALKGHIADAVKRQEALDLDVLVHGEAERNDMVEYFAENLAGFQTTKFGWVQSYGSRCVKPAIVVADIEREKPITVEWSTYAQSLTSKQMKGMLTGPVTILCWTFPREDITRQEIAQQLALALRDEVSDLQDAGINIIQIDEPAIREGLPLKKRDHKAYLEWAVNAFKISAASAKPETQIHTHMCYSEFNEIIDSVAALDADVITIETSRSNMELLKAFEEFNYPNEIGPGVYDIHSPNIPTEEWIEGLIKKAAEKIPVQRLWVNPDCGLKTRNWAETEAALANLVSAAKKLRAELA.

Residues 17 to 20 and K118 each bind 5-methyltetrahydropteroyltri-L-glutamate; that span reads RELK. Residues 436-438 and E489 contribute to the L-homocysteine site; that span reads IGS. L-methionine-binding positions include 436–438 and E489; that span reads IGS. Residues 520 to 521 and W566 each bind 5-methyltetrahydropteroyltri-L-glutamate; that span reads RC. D604 serves as a coordination point for L-homocysteine. D604 is an L-methionine binding site. 5-methyltetrahydropteroyltri-L-glutamate is bound at residue E610. H646, C648, and E670 together coordinate Zn(2+). H699 functions as the Proton donor in the catalytic mechanism. C731 contacts Zn(2+).

It belongs to the vitamin-B12 independent methionine synthase family. The cofactor is Zn(2+).

It carries out the reaction 5-methyltetrahydropteroyltri-L-glutamate + L-homocysteine = tetrahydropteroyltri-L-glutamate + L-methionine. Its pathway is amino-acid biosynthesis; L-methionine biosynthesis via de novo pathway; L-methionine from L-homocysteine (MetE route): step 1/1. Functionally, catalyzes the transfer of a methyl group from 5-methyltetrahydrofolate to homocysteine resulting in methionine formation. The chain is 5-methyltetrahydropteroyltriglutamate--homocysteine methyltransferase from Vibrio parahaemolyticus serotype O3:K6 (strain RIMD 2210633).